The primary structure comprises 462 residues: Siroheme synthase (462 aa).

The segment at 1–203 is precorrin-2 dehydrogenase /sirohydrochlorin ferrochelatase; sequence MEYLPLFANL…GKWEHAEKEI (203 aa). NAD(+) is bound by residues 22-23 and 43-44; these read NV and DD. At Ser128 the chain carries Phosphoserine. A uroporphyrinogen-III C-methyltransferase region spans residues 215–462; the sequence is GNVALVGAGP…NWFGKIIKEQ (248 aa). Position 224 (Pro224) interacts with S-adenosyl-L-methionine. The active-site Proton acceptor is the Asp247. Lys269 serves as the catalytic Proton donor. Residues 300-302, Ile305, 330-331, Met383, and Gly412 each bind S-adenosyl-L-methionine; these read GGD and TA.

In the N-terminal section; belongs to the precorrin-2 dehydrogenase / sirohydrochlorin ferrochelatase family. The protein in the C-terminal section; belongs to the precorrin methyltransferase family.

It catalyses the reaction uroporphyrinogen III + 2 S-adenosyl-L-methionine = precorrin-2 + 2 S-adenosyl-L-homocysteine + H(+). The enzyme catalyses precorrin-2 + NAD(+) = sirohydrochlorin + NADH + 2 H(+). It carries out the reaction siroheme + 2 H(+) = sirohydrochlorin + Fe(2+). It functions in the pathway cofactor biosynthesis; adenosylcobalamin biosynthesis; precorrin-2 from uroporphyrinogen III: step 1/1. The protein operates within cofactor biosynthesis; adenosylcobalamin biosynthesis; sirohydrochlorin from precorrin-2: step 1/1. It participates in porphyrin-containing compound metabolism; siroheme biosynthesis; precorrin-2 from uroporphyrinogen III: step 1/1. Its pathway is porphyrin-containing compound metabolism; siroheme biosynthesis; siroheme from sirohydrochlorin: step 1/1. It functions in the pathway porphyrin-containing compound metabolism; siroheme biosynthesis; sirohydrochlorin from precorrin-2: step 1/1. In terms of biological role, multifunctional enzyme that catalyzes the SAM-dependent methylations of uroporphyrinogen III at position C-2 and C-7 to form precorrin-2 via precorrin-1. Then it catalyzes the NAD-dependent ring dehydrogenation of precorrin-2 to yield sirohydrochlorin. Finally, it catalyzes the ferrochelation of sirohydrochlorin to yield siroheme. The sequence is that of Siroheme synthase from Baumannia cicadellinicola subsp. Homalodisca coagulata.